A 137-amino-acid polypeptide reads, in one-letter code: Small ribosomal subunit protein uS12 (137 aa).

Residues 1–57 are disordered; that stretch reads MPTINQLVRKPRKSKVEKSKSPALNVGYNSHKKVQTNVSSPQKRGVATRVGTMTPKK. A 3-methylthioaspartic acid modification is found at D102.

This sequence belongs to the universal ribosomal protein uS12 family. As to quaternary structure, part of the 30S ribosomal subunit. Contacts proteins S8 and S17. May interact with IF1 in the 30S initiation complex.

Functionally, with S4 and S5 plays an important role in translational accuracy. Its function is as follows. Interacts with and stabilizes bases of the 16S rRNA that are involved in tRNA selection in the A site and with the mRNA backbone. Located at the interface of the 30S and 50S subunits, it traverses the body of the 30S subunit contacting proteins on the other side and probably holding the rRNA structure together. The combined cluster of proteins S8, S12 and S17 appears to hold together the shoulder and platform of the 30S subunit. In Streptococcus sanguinis (strain SK36), this protein is Small ribosomal subunit protein uS12.